The chain runs to 463 residues: MKQQAKSRKPQQPEYIFQVETLSHEGRGIAHYGSHPDHPADKHGKKVFIRYALPGETVKAQITHEAKRLEEAEMVALLAEPSANRVEAVCPHYGICGGCSMQHIHPDEQIRLKQNVLQSHLQHFAGIQPEQWLEPIRSLQSDYRRRARIGVRYLPKQDRLILGFREHHSNRLTSIHTCSVLDKKLSDSLPELRNLLQSLKGKVHIGHVELAKGDHETSLLVRHIEKLNNADVNQLRQFALHKGWQLYLQPKGPESLRRIDEEQGAMRLHYALNAFDVNFAFSPLDFTQVNATVNEQMVQLACELLQLQQGERVLDLFCGLGNFSLPLARCVGAKGVIVGVEASEEMVQRATDNVKRNNLVQASFFSQDLTKDFSHHSWANQGFDALLIDPPRAGAYEIIQYVPNFGAKRIVYVSCNPATLARDAGVLVQHGYQLKKAAVMDMFTHTEHVESIALFEKIQEIND.

Residues 6 to 76 form the TRAM domain; the sequence is KSRKPQQPEY…KRLEEAEMVA (71 aa). The [4Fe-4S] cluster site is built by Cys90, Cys96, Cys99, and Cys178. Residues Gln288, Phe317, Asn322, Glu341, Asp368, and Asp389 each contribute to the S-adenosyl-L-methionine site. Cys415 functions as the Nucleophile in the catalytic mechanism.

The protein belongs to the class I-like SAM-binding methyltransferase superfamily. RNA M5U methyltransferase family. RlmD subfamily.

It carries out the reaction uridine(1939) in 23S rRNA + S-adenosyl-L-methionine = 5-methyluridine(1939) in 23S rRNA + S-adenosyl-L-homocysteine + H(+). In terms of biological role, catalyzes the formation of 5-methyl-uridine at position 1939 (m5U1939) in 23S rRNA. This is 23S rRNA (uracil(1939)-C(5))-methyltransferase RlmD from Acinetobacter baumannii (strain SDF).